The sequence spans 338 residues: Ornithine carbamoyltransferase (338 aa).

Residues serine 56–threonine 59, arginine 107, and histidine 134–glutamine 137 contribute to the carbamoyl phosphate site. Residues asparagine 168, aspartate 232, and serine 236–methionine 237 contribute to the L-ornithine site. Residues cysteine 274–leucine 275 and arginine 320 each bind carbamoyl phosphate.

The protein belongs to the aspartate/ornithine carbamoyltransferase superfamily. OTCase family.

The protein resides in the cytoplasm. The catalysed reaction is carbamoyl phosphate + L-ornithine = L-citrulline + phosphate + H(+). Its pathway is amino-acid biosynthesis; L-arginine biosynthesis; L-arginine from L-ornithine and carbamoyl phosphate: step 1/3. Reversibly catalyzes the transfer of the carbamoyl group from carbamoyl phosphate (CP) to the N(epsilon) atom of ornithine (ORN) to produce L-citrulline. This chain is Ornithine carbamoyltransferase (argI), found in Buchnera aphidicola subsp. Acyrthosiphon pisum (strain APS) (Acyrthosiphon pisum symbiotic bacterium).